The chain runs to 427 residues: Dihydroorotase (427 aa).

The Zn(2+) site is built by His-57 and His-59. Substrate-binding positions include 59 to 61 (HLR) and Asn-91. The Zn(2+) site is built by Asp-149, His-176, and His-229. Asn-275 lines the substrate pocket. Asp-302 contributes to the Zn(2+) binding site. Residue Asp-302 is part of the active site. Substrate-binding positions include His-306 and 320–321 (FG).

This sequence belongs to the metallo-dependent hydrolases superfamily. DHOase family. Class I DHOase subfamily. It depends on Zn(2+) as a cofactor.

It catalyses the reaction (S)-dihydroorotate + H2O = N-carbamoyl-L-aspartate + H(+). Its pathway is pyrimidine metabolism; UMP biosynthesis via de novo pathway; (S)-dihydroorotate from bicarbonate: step 3/3. Functionally, catalyzes the reversible cyclization of carbamoyl aspartate to dihydroorotate. The polypeptide is Dihydroorotase (Shouchella clausii (strain KSM-K16) (Alkalihalobacillus clausii)).